The primary structure comprises 106 residues: UPF0449 protein C19orf25 homolog (106 aa).

It belongs to the UPF0449 family.

This Xenopus tropicalis (Western clawed frog) protein is UPF0449 protein C19orf25 homolog.